A 1058-amino-acid polypeptide reads, in one-letter code: Carbamoyl phosphate synthase large chain (1058 aa).

A carboxyphosphate synthetic domain region spans residues 1-401 (MPKRKDIQKI…SLLKACRSLE (401 aa)). Positions 129, 169, 175, 176, 208, 210, 215, 241, 242, 243, 284, and 298 each coordinate ATP. One can recognise an ATP-grasp 1 domain in the interval 133–327 (KQLMQELDQP…IAKLAAKIAV (195 aa)). Mg(2+) contacts are provided by Gln284, Glu298, and Asn300. Residues Gln284, Glu298, and Asn300 each contribute to the Mn(2+) site. Residues 402–546 (IGVCHNEMTS…YSTYELENES (145 aa)) are oligomerization domain. A carbamoyl phosphate synthetic domain region spans residues 547 to 929 (VQSNKESILV…ALYKAFEANN (383 aa)). One can recognise an ATP-grasp 2 domain in the interval 671–861 (EKALKELGIP…MAQIATKLIL (191 aa)). ATP-binding residues include Arg707, Ser746, Ile748, Glu752, Gly777, Val778, His779, Ser780, Gln820, and Glu832. 3 residues coordinate Mg(2+): Gln820, Glu832, and Asn834. Positions 820, 832, and 834 each coordinate Mn(2+). Positions 930–1058 (SHLSEFGQIV…ESRCFNIEAI (129 aa)) constitute an MGS-like domain. Residues 930 to 1058 (SHLSEFGQIV…ESRCFNIEAI (129 aa)) form an allosteric domain region.

The protein belongs to the CarB family. As to quaternary structure, composed of two chains; the small (or glutamine) chain promotes the hydrolysis of glutamine to ammonia, which is used by the large (or ammonia) chain to synthesize carbamoyl phosphate. Tetramer of heterodimers (alpha,beta)4. Mg(2+) is required as a cofactor. Mn(2+) serves as cofactor.

It catalyses the reaction hydrogencarbonate + L-glutamine + 2 ATP + H2O = carbamoyl phosphate + L-glutamate + 2 ADP + phosphate + 2 H(+). The enzyme catalyses hydrogencarbonate + NH4(+) + 2 ATP = carbamoyl phosphate + 2 ADP + phosphate + 2 H(+). It functions in the pathway amino-acid biosynthesis; L-arginine biosynthesis; carbamoyl phosphate from bicarbonate: step 1/1. The protein operates within pyrimidine metabolism; UMP biosynthesis via de novo pathway; (S)-dihydroorotate from bicarbonate: step 1/3. In terms of biological role, large subunit of the glutamine-dependent carbamoyl phosphate synthetase (CPSase). CPSase catalyzes the formation of carbamoyl phosphate from the ammonia moiety of glutamine, carbonate, and phosphate donated by ATP, constituting the first step of 2 biosynthetic pathways, one leading to arginine and/or urea and the other to pyrimidine nucleotides. The large subunit (synthetase) binds the substrates ammonia (free or transferred from glutamine from the small subunit), hydrogencarbonate and ATP and carries out an ATP-coupled ligase reaction, activating hydrogencarbonate by forming carboxy phosphate which reacts with ammonia to form carbamoyl phosphate. This is Carbamoyl phosphate synthase large chain from Streptococcus pyogenes serotype M49 (strain NZ131).